We begin with the raw amino-acid sequence, 640 residues long: Translation factor GUF1, mitochondrial (640 aa).

The transit peptide at 1-26 (MRRLRSLYLQSSICFRRFNHYSAKDT) directs the protein to the mitochondrion. The tr-type G domain occupies 39 to 223 (ENYRNFSIVA…AIIDRIPPPT (185 aa)). GTP-binding positions include 48–55 (AHVDHGKS), 115–119 (DTPGH), and 169–172 (NKID).

The protein belongs to the TRAFAC class translation factor GTPase superfamily. Classic translation factor GTPase family. LepA subfamily.

The protein localises to the mitochondrion inner membrane. It catalyses the reaction GTP + H2O = GDP + phosphate + H(+). In terms of biological role, promotes mitochondrial protein synthesis. May act as a fidelity factor of the translation reaction, by catalyzing a one-codon backward translocation of tRNAs on improperly translocated ribosomes. Binds to mitochondrial ribosomes in a GTP-dependent manner. This chain is Translation factor GUF1, mitochondrial, found in Lachancea thermotolerans (strain ATCC 56472 / CBS 6340 / NRRL Y-8284) (Yeast).